Reading from the N-terminus, the 977-residue chain is Vacuolar protein sorting-associated protein 54 (977 aa).

Phosphoserine is present on Ser-8. Coiled coils occupy residues 240-260 (ELQD…DKIA) and 480-507 (LDKN…LDTE). The segment covering 535–552 (TSQRNASPNSEPCSSDSV) has biased composition (polar residues). The tract at residues 535–575 (TSQRNASPNSEPCSSDSVSEPECTTDSSSSKEHTSSSAIPG) is disordered. A coiled-coil region spans residues 582 to 603 (SEDMKLTDSELGKLANNIQELL).

The protein belongs to the VPS54 family. As to quaternary structure, component of the Golgi-associated retrograde protein (GARP) complex, also called VFT (VPS fifty-three) complex, composed of VPS51, VPS52, VPS53 and VPS54. EIPR1 interacts with GARP complex and mediates its recruitment to the trans-Golgi network. Interacts with VPS51 in an EIPR1-independent manner.

The protein localises to the golgi apparatus. The protein resides in the trans-Golgi network. It is found in the membrane. Acts as a component of the GARP complex that is involved in retrograde transport from early and late endosomes to the trans-Golgi network (TGN). The GARP complex is required for the maintenance of the cycling of mannose 6-phosphate receptors between the TGN and endosomes, this cycling is necessary for proper lysosomal sorting of acid hydrolases such as CTSD. Within the GARP complex, required to tether the complex to the TGN. Not involved in endocytic recycling. This chain is Vacuolar protein sorting-associated protein 54 (VPS54), found in Homo sapiens (Human).